The following is a 326-amino-acid chain: N-acetyl-gamma-glutamyl-phosphate reductase (326 aa).

Residue C155 is part of the active site.

This sequence belongs to the NAGSA dehydrogenase family. Type 1 subfamily.

The protein resides in the cytoplasm. It carries out the reaction N-acetyl-L-glutamate 5-semialdehyde + phosphate + NADP(+) = N-acetyl-L-glutamyl 5-phosphate + NADPH + H(+). The protein operates within amino-acid biosynthesis; L-arginine biosynthesis; N(2)-acetyl-L-ornithine from L-glutamate: step 3/4. Its function is as follows. Catalyzes the NADPH-dependent reduction of N-acetyl-5-glutamyl phosphate to yield N-acetyl-L-glutamate 5-semialdehyde. In Shewanella frigidimarina (strain NCIMB 400), this protein is N-acetyl-gamma-glutamyl-phosphate reductase.